The sequence spans 348 residues: Rhodopsin (348 aa).

An N-acetylmethionine modification is found at methionine 1. The Extracellular portion of the chain corresponds to 1–36 (MNGTEGPNFYVPFSNKTGVVRSPFEYPQYYLAEPWQ). N-linked (GlcNAc...) asparagine glycosylation is found at asparagine 2 and asparagine 15. Residues 37–61 (FSMLAAYMFLLIVLGFPINFLTLYV) traverse the membrane as a helical segment. Over 62–73 (TVQHKKLRTPLN) the chain is Cytoplasmic. A helical membrane pass occupies residues 74-96 (YILLNLAVADLFMVFGGFTTTLY). Topologically, residues 97-110 (TSLHGYFVFGPTGC) are extracellular. The cysteines at positions 110 and 187 are disulfide-linked. Residues 111–133 (NLEGFFATLGGEIALWSLVVLAI) traverse the membrane as a helical segment. The short motif at 134-136 (ERY) is the 'Ionic lock' involved in activated form stabilization element. Topologically, residues 134–152 (ERYVVVCKPMSNFRFGENH) are cytoplasmic. A helical transmembrane segment spans residues 153 to 173 (AIMGVGLTWVMALACAAPPLV). Topologically, residues 174-202 (GWSRYIPEGMQCSCGIDYYTLKPEVNNES) are extracellular. Residue glutamate 201 participates in Zn(2+) binding. The chain crosses the membrane as a helical span at residues 203–224 (FVIYMFVVHFTIPMIVIFFCYG). At 225–252 (QLVFTVKEAAAQQQESATTQKAEKEVTR) the chain is on the cytoplasmic side. A helical membrane pass occupies residues 253–274 (MVIIMVIAFLICWVPYASVAFY). The Extracellular segment spans residues 275-286 (IFTHQGFNFGPI). A Zn(2+)-binding site is contributed by glutamine 279. The helical transmembrane segment at 287 to 308 (FMTLPAFFAKAAAIYNPVIYIM) threads the bilayer. Position 296 is an N6-(retinylidene)lysine (lysine 296). Topologically, residues 309-348 (MNKQFRTCMITTLCCGKNPLGDDEVSASASKTETSQVAPA) are cytoplasmic. Residues cysteine 322 and cysteine 323 are each lipidated (S-palmitoyl cysteine). Residues 330–348 (DDEVSASASKTETSQVAPA) form an interaction with SAG region. 2 positions are modified to phosphoserine: serine 334 and serine 338. Phosphothreonine occurs at positions 340 and 342. Serine 343 is modified (phosphoserine).

It belongs to the G-protein coupled receptor 1 family. Opsin subfamily. As to quaternary structure, homodimer. Interacts (phosphorylated form) with SAG. Interacts with GNAT1. Interacts with GNAT3. SAG and G-proteins compete for a common binding site. Interacts with GRK1. Interacts with PRCD; the interaction promotes PRCD stability. Forms a complex with ASAP1 and ARF4. Forms a complex with ASAP1, RAB11A, Rabin8/RAB3IP, ARF4 and RAB11FIP3; the complex regulates Golgi-to-cilia rhodopsin/RHO transport in photoreceptors. Post-translationally, phosphorylated on some or all of the serine and threonine residues present in the C-terminal region. In terms of processing, contains one covalently linked retinal chromophore. Upon light absorption, the covalently bound 11-cis-retinal is converted to all-trans-retinal. After hydrolysis of the Schiff base and release of the covalently bound all-trans-retinal, active rhodopsin is regenerated by binding of a fresh molecule of 11-cis-retinal.

It localises to the membrane. Its subcellular location is the cell projection. The protein localises to the cilium. The protein resides in the photoreceptor outer segment. Photoreceptor required for image-forming vision at low light intensity. Required for photoreceptor cell viability after birth. Light-induced isomerization of 11-cis to all-trans retinal triggers a conformational change that activates signaling via G-proteins. Subsequent receptor phosphorylation mediates displacement of the bound G-protein alpha subunit by the arrestin SAG and terminates signaling. This chain is Rhodopsin (RHO), found in Pagophilus groenlandicus (Harp seal).